The sequence spans 333 residues: Protein SEEDLING LETHAL 1, chloroplastic (333 aa).

The transit peptide at 1–55 (MQQEALSFLSSSLPSLHHNFPSLSRLRFNNFPALSFKPNTSSSSSSFFKSPDIPS) directs the protein to the chloroplast. Residues 38-67 (PNTSSSSSSFFKSPDIPSLSSTTTTTTTTE) form a disordered region.

Belongs to the mTERF family. As to quaternary structure, self-interacts. Associates with the plastid-encoded RNA polymerase (PEP) complex. Interacts directly with PTAC7/PAP12, PTAC12/HMR/PAP5 and PTAC14/PAP7. As to expression, expressed in green aerial tissues such as cotyledons, leaves, flowers and siliques, but not in roots.

The protein resides in the plastid. The protein localises to the chloroplast stroma. It localises to the chloroplast nucleoid. Transcription termination factor required for chloroplast gene expression and protein synthesis in chloroplasts. Necessary for chloroplast photosynthetic complexes assembly by modulating the accumulation of photosynthetic proteins. Essential for embryogenesis. This Arabidopsis thaliana (Mouse-ear cress) protein is Protein SEEDLING LETHAL 1, chloroplastic.